The primary structure comprises 119 residues: Large ribosomal subunit protein uL18 (119 aa).

Belongs to the universal ribosomal protein uL18 family. Part of the 50S ribosomal subunit; part of the 5S rRNA/L5/L18/L25 subcomplex. Contacts the 5S and 23S rRNAs.

Its function is as follows. This is one of the proteins that bind and probably mediate the attachment of the 5S RNA into the large ribosomal subunit, where it forms part of the central protuberance. This Borrelia recurrentis (strain A1) protein is Large ribosomal subunit protein uL18.